Here is a 309-residue protein sequence, read N- to C-terminus: Elongation factor Ts (309 aa).

The tract at residues 82-85 (TDFV) is involved in Mg(2+) ion dislocation from EF-Tu.

The protein belongs to the EF-Ts family.

It is found in the cytoplasm. Associates with the EF-Tu.GDP complex and induces the exchange of GDP to GTP. It remains bound to the aminoacyl-tRNA.EF-Tu.GTP complex up to the GTP hydrolysis stage on the ribosome. This chain is Elongation factor Ts, found in Rickettsia africae (strain ESF-5).